The sequence spans 660 residues: MDGLVAQCSARLLQQEREIKALTAEIDRLKNCGCLEASPSLEQLREENLKLKYRLNILRRSLQEERRKPTKNMININSRLQEVFGCAIRAAYPDLENPPLIVTPSQQPKFGDYQCNSAMGISQMLKAKEQKVSPREIAENITKHLPNNKYIDKVEIAGPGFINVHLRKDFVSEQLTSLLVNGVQLPVLGDKEKVIVDFSSPNIAKEMHVGHLRSTIIGESMSRLFEFAGYDVLRLNHVGDWGTQFGMLIAHLQDKFPDYLTVSPPIGDLQAFYKESKKRFDADEEFKKRAYQCVVLLQSKNPDIMKAWNLICDVSREEFKKIYDALDITLIERGESFYQDRMKDIVKEFEDKGFVQVDDGRKIVFVPGCSVPLTIVKSDGGYTYDTSDLAAIKQRLFEEKANKIIYVVDNGQAIHFQTIFAAAQMIGWYDPKVTLVTHVGFGVVLGEDKKKFKTRSGETVRLMDLLEEGLKRSMDKLKEKERDKVLTEEELKAAQTSVAYGCIKYADLSHNRLNDYIFSFDKMLDDRGNTAAYLLYAFTRIRSIARLANIDEAMLQRAARETKIILDHEKEWKLGRCILRFPEILQKILDDLFLHTLCDYIYELATTFTEFYDSCYCVEKDRQTGKVLKVNMWRMLLCEAVAAVMAKGFDILGIKPVQRM.

Met-1 carries the post-translational modification N-acetylmethionine. The could be involved in the assembly of the multisynthetase complex stretch occupies residues 1 to 72 (MDGLVAQCSA…QEERRKPTKN (72 aa)). Residues 200–202 (SPN), His-211, Tyr-384, Asp-388, and Gln-412 each bind L-arginine. A 'HIGH' region motif is present at residues 201-212 (PNIAKEMHVGHL). The tract at residues 529–543 (NTAAYLLYAFTRIRS) is interaction with tRNA.

It belongs to the class-I aminoacyl-tRNA synthetase family. As to quaternary structure, interacts (via N-terminus) with AIMP1 (via N-terminus); this stimulates its catalytic activity. Interacts (via N-terminus) with LARS2 (via C-terminus). Monomer. Part of a multisubunit complex that groups tRNA ligases for Arg (RARS1), Asp (DARS1), Gln (QARS1), Ile (IARS1), Leu (LARS1), Lys (KARS1), Met (MARS1) the bifunctional ligase for Glu and Pro (EPRS1) and the auxiliary subunits AIMP1/p43, AIMP2/p38 and EEF1E1/p18. Interacts with QARS1. Part of a complex composed of RARS1, QARS1 and AIMP1.

It localises to the cytoplasm. The protein localises to the cytosol. The catalysed reaction is tRNA(Arg) + L-arginine + ATP = L-arginyl-tRNA(Arg) + AMP + diphosphate. Functionally, forms part of a macromolecular complex that catalyzes the attachment of specific amino acids to cognate tRNAs during protein synthesis. Modulates the secretion of AIMP1 and may be involved in generation of the inflammatory cytokine EMAP2 from AIMP1. The protein is Arginine--tRNA ligase, cytoplasmic (Rars1) of Mus musculus (Mouse).